The chain runs to 157 residues: Transcription elongation factor GreA (157 aa).

Residues 13–75 (RARLEAELEE…EIKSILARAQ (63 aa)) are a coiled coil. The interval 113 to 142 (EAKPSEGKISNESPIGSALLGKRPRQKVTV) is disordered.

It belongs to the GreA/GreB family.

Functionally, necessary for efficient RNA polymerase transcription elongation past template-encoded arresting sites. The arresting sites in DNA have the property of trapping a certain fraction of elongating RNA polymerases that pass through, resulting in locked ternary complexes. Cleavage of the nascent transcript by cleavage factors such as GreA or GreB allows the resumption of elongation from the new 3'terminus. GreA releases sequences of 2 to 3 nucleotides. The sequence is that of Transcription elongation factor GreA from Roseiflexus sp. (strain RS-1).